The chain runs to 171 residues: Crossover junction endodeoxyribonuclease RuvC (171 aa).

Catalysis depends on residues D7, E66, and D138. 3 residues coordinate Mg(2+): D7, E66, and D138.

This sequence belongs to the RuvC family. As to quaternary structure, homodimer which binds Holliday junction (HJ) DNA. The HJ becomes 2-fold symmetrical on binding to RuvC with unstacked arms; it has a different conformation from HJ DNA in complex with RuvA. In the full resolvosome a probable DNA-RuvA(4)-RuvB(12)-RuvC(2) complex forms which resolves the HJ. Requires Mg(2+) as cofactor.

It is found in the cytoplasm. The catalysed reaction is Endonucleolytic cleavage at a junction such as a reciprocal single-stranded crossover between two homologous DNA duplexes (Holliday junction).. The RuvA-RuvB-RuvC complex processes Holliday junction (HJ) DNA during genetic recombination and DNA repair. Endonuclease that resolves HJ intermediates. Cleaves cruciform DNA by making single-stranded nicks across the HJ at symmetrical positions within the homologous arms, yielding a 5'-phosphate and a 3'-hydroxyl group; requires a central core of homology in the junction. The consensus cleavage sequence is 5'-(A/T)TT(C/G)-3'. Cleavage occurs on the 3'-side of the TT dinucleotide at the point of strand exchange. HJ branch migration catalyzed by RuvA-RuvB allows RuvC to scan DNA until it finds its consensus sequence, where it cleaves and resolves the cruciform DNA. In Francisella philomiragia subsp. philomiragia (strain ATCC 25017 / CCUG 19701 / FSC 153 / O#319-036), this protein is Crossover junction endodeoxyribonuclease RuvC.